The primary structure comprises 241 residues: 3-deoxy-D-manno-octulosonic acid kinase (241 aa).

Aspartate 171 is an active-site residue.

It belongs to the protein kinase superfamily. KdkA/RfaP family.

It localises to the cell inner membrane. The enzyme catalyses an alpha-Kdo-(2-&gt;6)-lipid IVA + ATP = a 4-O-phospho-alpha-Kdo-(2-&gt;6)-lipid IVA + ADP + H(+). It participates in bacterial outer membrane biogenesis; LPS core biosynthesis. Functionally, catalyzes the ATP-dependent phosphorylation of the 3-deoxy-D-manno-octulosonic acid (Kdo) residue in Kdo-lipid IV(A) at the 4-OH position. The sequence is that of 3-deoxy-D-manno-octulosonic acid kinase from Haemophilus influenzae (strain PittEE).